The sequence spans 441 residues: Endothelin receptor type B (441 aa).

The signal sequence occupies residues 1-26 (MQPPPSLCGLALLALVLACGMAEVWG). The Extracellular segment spans residues 27–100 (EEREMPSAPA…RPTEIKDTFK (74 aa)). Positions 30–90 (EMPSAPATPP…APRRTPPPCQ (61 aa)) are disordered. Over residues 47 to 65 (LTPSTKTSWPRDSNASLPR) the composition is skewed to polar residues. An N-linked (GlcNAc...) asparagine glycan is attached at N60. Residues 101 to 125 (YINTVVSCLVFVLGIIGNSTLLRII) traverse the membrane as a helical segment. The Cytoplasmic portion of the chain corresponds to 126–136 (YKNKCMRNGPN). A helical membrane pass occupies residues 137–162 (ILIASLALGDLLHIIIDIPINVYKLL). The Extracellular portion of the chain corresponds to 163 to 174 (AEDWPFGAEMCK). An intrachain disulfide couples C173 to C254. Residues 175–196 (LVPFIQKASVGITVLSLCALSI) traverse the membrane as a helical segment. Over 197–217 (DRYRAVASWSRIKGIGVPKWT) the chain is Cytoplasmic. The chain crosses the membrane as a helical span at residues 218-242 (AVEIVLIWVVSVILAVPEAIGFNLV). The Extracellular segment spans residues 243 to 270 (TIDYKGSYLRICLLNPTQKTAFMQFYKT). Residues 271 to 295 (AKDWWLFSFYFCLPLAITAFFYTLM) traverse the membrane as a helical segment. The Cytoplasmic segment spans residues 296 to 323 (TCEMLRKKSGMQIALNDHLKQRREVAKT). S304 carries the phosphoserine modification. The chain crosses the membrane as a helical span at residues 324–349 (VFCLVLVFGLCWLALHLSRILKLTLY). At 350 to 361 (DQNDPNRCELLS) the chain is on the extracellular side. The helical transmembrane segment at 362 to 388 (FLLVLDYIGINMASLNSCINPIALYLV) threads the bilayer. Over 389-441 (SKRFKNCFKSCLCCWCQSFEEKQSLEEKQSCLKFKANDHGYDNFRSSNKYSSS) the chain is Cytoplasmic. Residues C402 and C404 are each lipidated (S-palmitoyl cysteine). S418 is modified (phosphoserine). Y438 carries the phosphotyrosine modification. Phosphoserine is present on residues S439, S440, and S441.

This sequence belongs to the G-protein coupled receptor 1 family. Endothelin receptor subfamily. EDNRB sub-subfamily.

The protein localises to the cell membrane. Functionally, non-specific receptor for endothelin 1, 2, and 3. Mediates its action by association with G proteins that activate a phosphatidylinositol-calcium second messenger system. The polypeptide is Endothelin receptor type B (EDNRB) (Oryctolagus cuniculus (Rabbit)).